A 151-amino-acid chain; its full sequence is Cytochrome c-type biogenesis protein CcmE (151 aa).

Residues 1-8 (MNPLRRKR) are Cytoplasmic-facing. Residues 9–29 (LLIILAILVGVGVAVGLALSA) form a helical; Signal-anchor for type II membrane protein membrane-spanning segment. At 30–151 (LQQNINLFYT…QSAPTPAKEG (122 aa)) the chain is on the periplasmic side. Heme contacts are provided by histidine 124 and tyrosine 128.

It belongs to the CcmE/CycJ family.

The protein localises to the cell inner membrane. In terms of biological role, heme chaperone required for the biogenesis of c-type cytochromes. Transiently binds heme delivered by CcmC and transfers the heme to apo-cytochromes in a process facilitated by CcmF and CcmH. In Pseudomonas fluorescens biotype C, this protein is Cytochrome c-type biogenesis protein CcmE.